The chain runs to 392 residues: Ribonuclease D (392 aa).

The 3'-5' exonuclease domain occupies 12 to 178 (LIETTEALAA…PVYEGLRARL (167 aa)). In terms of domain architecture, HRDC spans 217–298 (NRRQLALVKA…ASTKAIPDAE (82 aa)).

It belongs to the RNase D family. Requires a divalent metal cation as cofactor.

It localises to the cytoplasm. It carries out the reaction Exonucleolytic cleavage that removes extra residues from the 3'-terminus of tRNA to produce 5'-mononucleotides.. Functionally, exonuclease involved in the 3' processing of various precursor tRNAs. Initiates hydrolysis at the 3'-terminus of an RNA molecule and releases 5'-mononucleotides. The polypeptide is Ribonuclease D (Acidiphilium cryptum (strain JF-5)).